Here is a 170-residue protein sequence, read N- to C-terminus: Ureidoglycolate lyase 1 (170 aa).

This sequence belongs to the ureidoglycolate lyase family. In terms of assembly, homodimer. It depends on Ni(2+) as a cofactor.

The catalysed reaction is (S)-ureidoglycolate = urea + glyoxylate. It functions in the pathway nitrogen metabolism; (S)-allantoin degradation. Functionally, catalyzes the catabolism of the allantoin degradation intermediate (S)-ureidoglycolate, generating urea and glyoxylate. Involved in the utilization of allantoin as nitrogen source. This is Ureidoglycolate lyase 1 from Rhizobium meliloti (strain 1021) (Ensifer meliloti).